Reading from the N-terminus, the 342-residue chain is Nucleoid-associated protein Sfri_2491 (342 aa).

The protein belongs to the YejK family.

Its subcellular location is the cytoplasm. It is found in the nucleoid. The sequence is that of Nucleoid-associated protein Sfri_2491 from Shewanella frigidimarina (strain NCIMB 400).